Consider the following 1533-residue polypeptide: Glycogen debranching enzyme (1533 aa).

Serine 64 carries the phosphoserine modification. Active-site residues include aspartate 527, histidine 530, and aspartate 628.

It belongs to the glycogen debranching enzyme family. In terms of assembly, monomer. Interacts with NHLRC1/malin. Post-translationally, ubiquitinated. As to expression, ubiquitous. Expressed in striated skeletal muscle, heart, liver, spleen, skin, spinal cord, lung, kidney and testicle.

The protein resides in the cytoplasm. It carries out the reaction Transfers a segment of a (1-&gt;4)-alpha-D-glucan to a new position in an acceptor, which may be glucose or a (1-&gt;4)-alpha-D-glucan.. It catalyses the reaction Hydrolysis of (1-&gt;6)-alpha-D-glucosidic branch linkages in glycogen phosphorylase limit dextrin.. Functionally, multifunctional enzyme acting as 1,4-alpha-D-glucan:1,4-alpha-D-glucan 4-alpha-D-glycosyltransferase and amylo-1,6-glucosidase in glycogen degradation. This Equus caballus (Horse) protein is Glycogen debranching enzyme.